Here is a 101-residue protein sequence, read N- to C-terminus: NAD(P)H-quinone oxidoreductase subunit 4L, chloroplastic (101 aa).

Transmembrane regions (helical) follow at residues 2-22, 32-52, and 61-81; these read MLEY…YGLI, MCLE…SYFF, and IFSI…LAIV.

It belongs to the complex I subunit 4L family. In terms of assembly, NDH is composed of at least 16 different subunits, 5 of which are encoded in the nucleus.

Its subcellular location is the plastid. The protein localises to the chloroplast thylakoid membrane. The catalysed reaction is a plastoquinone + NADH + (n+1) H(+)(in) = a plastoquinol + NAD(+) + n H(+)(out). It carries out the reaction a plastoquinone + NADPH + (n+1) H(+)(in) = a plastoquinol + NADP(+) + n H(+)(out). Functionally, NDH shuttles electrons from NAD(P)H:plastoquinone, via FMN and iron-sulfur (Fe-S) centers, to quinones in the photosynthetic chain and possibly in a chloroplast respiratory chain. The immediate electron acceptor for the enzyme in this species is believed to be plastoquinone. Couples the redox reaction to proton translocation, and thus conserves the redox energy in a proton gradient. The sequence is that of NAD(P)H-quinone oxidoreductase subunit 4L, chloroplastic from Ipomoea purpurea (Common morning glory).